The primary structure comprises 392 residues: ATP phosphoribosyltransferase regulatory subunit (392 aa).

It belongs to the class-II aminoacyl-tRNA synthetase family. HisZ subfamily. As to quaternary structure, heteromultimer composed of HisG and HisZ subunits.

It localises to the cytoplasm. The protein operates within amino-acid biosynthesis; L-histidine biosynthesis; L-histidine from 5-phospho-alpha-D-ribose 1-diphosphate: step 1/9. Required for the first step of histidine biosynthesis. May allow the feedback regulation of ATP phosphoribosyltransferase activity by histidine. The sequence is that of ATP phosphoribosyltransferase regulatory subunit from Synechococcus sp. (strain CC9902).